The primary structure comprises 163 residues: Glycine cleavage system H protein, mitochondrial (163 aa).

The N-terminal 34 residues, 1–34 (MALRMWASSAANALGVSCAPKSHLLPALSLSRCF), are a transit peptide targeting the mitochondrion. One can recognise a Lipoyl-binding domain in the interval 56–137 (VATIGITDHA…YEEGWMVKVK (82 aa)). Lys96 bears the N6-lipoyllysine mark.

The protein belongs to the GcvH family. The glycine cleavage system is composed of four proteins: P, T, L and H. Requires (R)-lipoate as cofactor.

It localises to the mitochondrion. Its function is as follows. The glycine cleavage system catalyzes the degradation of glycine. The H protein shuttles the methylamine group of glycine from the P protein to the T protein. The sequence is that of Glycine cleavage system H protein, mitochondrial (GDCSH) from Mesembryanthemum crystallinum (Common ice plant).